The chain runs to 135 residues: NADH-quinone oxidoreductase subunit A (135 aa).

3 consecutive transmembrane segments (helical) span residues 9-29 (YFPI…LLTV), 67-87 (VGML…WVVV), and 97-117 (LFGF…FFYI).

Belongs to the complex I subunit 3 family. NDH-1 is composed of 14 different subunits. Subunits NuoA, H, J, K, L, M, N constitute the membrane sector of the complex.

Its subcellular location is the cell inner membrane. The catalysed reaction is a quinone + NADH + 5 H(+)(in) = a quinol + NAD(+) + 4 H(+)(out). Its function is as follows. NDH-1 shuttles electrons from NADH, via FMN and iron-sulfur (Fe-S) centers, to quinones in the respiratory chain. The immediate electron acceptor for the enzyme in this species is believed to be ubiquinone. Couples the redox reaction to proton translocation (for every two electrons transferred, four hydrogen ions are translocated across the cytoplasmic membrane), and thus conserves the redox energy in a proton gradient. The chain is NADH-quinone oxidoreductase subunit A from Solibacter usitatus (strain Ellin6076).